The primary structure comprises 335 residues: Phosphate acyltransferase (335 aa).

The protein belongs to the PlsX family. In terms of assembly, homodimer. Probably interacts with PlsY.

The protein localises to the cytoplasm. It carries out the reaction a fatty acyl-[ACP] + phosphate = an acyl phosphate + holo-[ACP]. It functions in the pathway lipid metabolism; phospholipid metabolism. In terms of biological role, catalyzes the reversible formation of acyl-phosphate (acyl-PO(4)) from acyl-[acyl-carrier-protein] (acyl-ACP). This enzyme utilizes acyl-ACP as fatty acyl donor, but not acyl-CoA. The protein is Phosphate acyltransferase of Streptococcus pyogenes serotype M18 (strain MGAS8232).